The following is a 529-amino-acid chain: Low affinity inorganic phosphate transporter 4 (529 aa).

The Cytoplasmic portion of the chain corresponds to 1-21; it reads MASDNLVVLNALDTARTQWYH. A helical membrane pass occupies residues 22 to 42; sequence VTAVIIAGMGFFTDAYDLFCI. The Extracellular portion of the chain corresponds to 43–71; that stretch reads STVSKLLGRLYYYDPSTKAPGKLPHMANN. The helical transmembrane segment at 72–92 threads the bilayer; sequence WVIGVALVGTLSGQLVFGWLG. Over 93–99 the chain is Cytoplasmic; it reads DKLGRKK. A helical membrane pass occupies residues 100–120; that stretch reads VYGLTLILMVICALCSGLSLG. Topologically, residues 121 to 125 are extracellular; sequence YSPKS. A helical membrane pass occupies residues 126–146; sequence VIGTLCFFRFWLGFGIGGDYP. The Cytoplasmic portion of the chain corresponds to 147-161; that stretch reads LSATIMSEYANKSTR. Residues 162-182 traverse the membrane as a helical segment; it reads GAFIAAVFAMQGVGIIFAGLV. At 183-211 the chain is on the extracellular side; sequence SMTISKVFLMNFEGKPFNVDEVLSTEPEA. Residues 212-232 form a helical membrane-spanning segment; that stretch reads DYVWRIVLMLGALPALLTYYW. The Cytoplasmic segment spans residues 233 to 291; sequence RMKMPETGRYTAIIEGNAKQAAIDMGKVLDIEIQAEGDKLAQFKAANEYSLLSNEFFQR. Residues 292–312 form a helical membrane-spanning segment; sequence HGLHLIGTMSTWFLLDIAFYS. Residues 313–344 lie on the Extracellular side of the membrane; the sequence is QNLTQKDIFPVMGLTSKANTISALREMFETSR. Residue asparagine 314 is glycosylated (N-linked (GlcNAc...) asparagine). A helical membrane pass occupies residues 345–365; it reads AMFVIALFGTFPGYWFTVFFI. At 366–374 the chain is on the cytoplasmic side; that stretch reads EKIGRFKIQ. A helical transmembrane segment spans residues 375–395; it reads LVGFFMMSVFMAIIGVKYDYL. Topologically, residues 396-405 are extracellular; the sequence is RNKEHKWTFA. Residues 406–426 form a helical membrane-spanning segment; that stretch reads ALYGLTFFFANFGPNSTTFVL. Topologically, residues 427–437 are cytoplasmic; it reads PAELFPTRVRS. The helical transmembrane segment at 438 to 458 threads the bilayer; the sequence is TCHALSAALGKAGAMISAFGI. Residues 459–471 lie on the Extracellular side of the membrane; it reads QQYTQDQDVRKIK. A helical membrane pass occupies residues 472–492; sequence TAMLLLAFTNMVGFCCTFLVT. The Cytoplasmic segment spans residues 493–529; the sequence is ETKGRSLEEISGEDGRQNETQMKTTRPVSGHPDDGWE. The disordered stretch occupies residues 501–529; sequence EISGEDGRQNETQMKTTRPVSGHPDDGWE. Polar residues predominate over residues 510-519; the sequence is NETQMKTTRP.

The protein belongs to the major facilitator superfamily. Phosphate:H(+) symporter (TC 2.A.1.9) family.

It is found in the cell membrane. The enzyme catalyses phosphate(in) + H(+)(in) = phosphate(out) + H(+)(out). In terms of biological role, low-affinity transporter for external inorganic phosphate (Pi) probably involved in the acquisition of phosphate released by arbuscular mycorrhizal (AM) fungi (e.g. Rhizophagus irregularis and Glomus intraradices) during AM symbiosis. Acts as a Pi-sensing machinery at the root tip level, independently of AM fungi, involved in the regulation of early root branching and lateral roots formation. This is Low affinity inorganic phosphate transporter 4 from Petunia hybrida (Petunia).